Here is a 375-residue protein sequence, read N- to C-terminus: 1-deoxy-D-xylulose 5-phosphate reductoisomerase (375 aa).

Residues threonine 10, glycine 11, serine 12, valine 13, lysine 37, and asparagine 114 each coordinate NADPH. A 1-deoxy-D-xylulose 5-phosphate-binding site is contributed by lysine 115. Glutamate 116 is an NADPH binding site. Aspartate 136 lines the Mn(2+) pocket. Positions 137, 138, 162, and 185 each coordinate 1-deoxy-D-xylulose 5-phosphate. Position 138 (glutamate 138) interacts with Mn(2+). Glycine 191 provides a ligand contact to NADPH. 1-deoxy-D-xylulose 5-phosphate-binding residues include serine 198, asparagine 203, lysine 204, and glutamate 207. Residue glutamate 207 participates in Mn(2+) binding.

The protein belongs to the DXR family. It depends on Mg(2+) as a cofactor. Mn(2+) is required as a cofactor.

The enzyme catalyses 2-C-methyl-D-erythritol 4-phosphate + NADP(+) = 1-deoxy-D-xylulose 5-phosphate + NADPH + H(+). Its pathway is isoprenoid biosynthesis; isopentenyl diphosphate biosynthesis via DXP pathway; isopentenyl diphosphate from 1-deoxy-D-xylulose 5-phosphate: step 1/6. Catalyzes the NADPH-dependent rearrangement and reduction of 1-deoxy-D-xylulose-5-phosphate (DXP) to 2-C-methyl-D-erythritol 4-phosphate (MEP). The sequence is that of 1-deoxy-D-xylulose 5-phosphate reductoisomerase from Sulfurihydrogenibium sp. (strain YO3AOP1).